Consider the following 92-residue polypeptide: MENIISLLALKNDPTSATTGAGLVAVGAGLASIGNFGTGLGQGLSAGRAAEAVGRNPEAIKKIRSLMIIGMAISESASLYSFIIAILLVFVY.

The next 2 membrane-spanning stretches (helical) occupy residues 20 to 40 (GAGL…GTGL) and 71 to 91 (MAIS…LVFV).

It belongs to the ATPase C chain family. As to quaternary structure, F-type ATPases have 2 components, F(1) - the catalytic core - and F(0) - the membrane proton channel. F(1) has five subunits: alpha(3), beta(3), gamma(1), delta(1), epsilon(1). F(0) has three main subunits: a(1), b(2) and c(10-14). The alpha and beta chains form an alternating ring which encloses part of the gamma chain. F(1) is attached to F(0) by a central stalk formed by the gamma and epsilon chains, while a peripheral stalk is formed by the delta and b chains.

It is found in the cell membrane. Its function is as follows. F(1)F(0) ATP synthase produces ATP from ADP in the presence of a proton or sodium gradient. F-type ATPases consist of two structural domains, F(1) containing the extramembraneous catalytic core and F(0) containing the membrane proton channel, linked together by a central stalk and a peripheral stalk. During catalysis, ATP synthesis in the catalytic domain of F(1) is coupled via a rotary mechanism of the central stalk subunits to proton translocation. Key component of the F(0) channel; it plays a direct role in translocation across the membrane. A homomeric c-ring of between 10-14 subunits forms the central stalk rotor element with the F(1) delta and epsilon subunits. The protein is ATP synthase subunit c of Mycoplasmopsis pulmonis (strain UAB CTIP) (Mycoplasma pulmonis).